An 84-amino-acid chain; its full sequence is RNA-binding protein Hfq (84 aa).

The region spanning 10 to 69 is the Sm domain; that stretch reads EPFLNTLRREHVPVSIYLVNGIKLQGQIESFDQYVVLLRNTVTQMVFKHAISTIVPGRAV.

This sequence belongs to the Hfq family. As to quaternary structure, homohexamer.

Its function is as follows. RNA chaperone that binds small regulatory RNA (sRNAs) and mRNAs to facilitate mRNA translational regulation in response to envelope stress, environmental stress and changes in metabolite concentrations. Also binds with high specificity to tRNAs. The polypeptide is RNA-binding protein Hfq (Verminephrobacter eiseniae (strain EF01-2)).